A 174-amino-acid polypeptide reads, in one-letter code: RNA pyrophosphohydrolase (174 aa).

Residues 6 to 149 (GYRPNVGIIL…KRDVYERALS (144 aa)) enclose the Nudix hydrolase domain. Residues 38–59 (GGIKPGESPEAAMYRELLEEVG) carry the Nudix box motif.

This sequence belongs to the Nudix hydrolase family. RppH subfamily. A divalent metal cation is required as a cofactor.

In terms of biological role, accelerates the degradation of transcripts by removing pyrophosphate from the 5'-end of triphosphorylated RNA, leading to a more labile monophosphorylated state that can stimulate subsequent ribonuclease cleavage. In Chromobacterium violaceum (strain ATCC 12472 / DSM 30191 / JCM 1249 / CCUG 213 / NBRC 12614 / NCIMB 9131 / NCTC 9757 / MK), this protein is RNA pyrophosphohydrolase.